The chain runs to 118 residues: Small ribosomal subunit protein uS13 (118 aa).

The segment at Gly94–Lys118 is disordered.

It belongs to the universal ribosomal protein uS13 family. In terms of assembly, part of the 30S ribosomal subunit. Forms a loose heterodimer with protein S19. Forms two bridges to the 50S subunit in the 70S ribosome.

Located at the top of the head of the 30S subunit, it contacts several helices of the 16S rRNA. In the 70S ribosome it contacts the 23S rRNA (bridge B1a) and protein L5 of the 50S subunit (bridge B1b), connecting the 2 subunits; these bridges are implicated in subunit movement. Contacts the tRNAs in the A and P-sites. In Pasteurella multocida (strain Pm70), this protein is Small ribosomal subunit protein uS13.